The chain runs to 209 residues: Putative cardiolipin synthase (209 aa).

4 consecutive transmembrane segments (helical) span residues 27 to 47 (AFVY…ILVF), 82 to 102 (VTVP…VLTL), 126 to 146 (VTYV…TILL), and 157 to 177 (LLAC…WAFV).

Belongs to the CDP-alcohol phosphatidyltransferase class-I family.

Its subcellular location is the cell membrane. It catalyses the reaction a CDP-1,2-diacyl-sn-glycerol + a 1,2-diacyl-sn-glycero-3-phospho-(1'-sn-glycerol) = a cardiolipin + CMP + H(+). It participates in lipid metabolism; phospholipid metabolism. Its function is as follows. May catalyze the biosynthesis of cardiolipin from phosphatidylglycerol (PG) and CDP-diacylglycerol. The chain is Putative cardiolipin synthase from Mycobacterium bovis (strain ATCC BAA-935 / AF2122/97).